The primary structure comprises 168 residues: Ribosome maturation factor RimM (168 aa).

Residues 97–168 (PNEYYYYELL…RLVVKVPEWI (72 aa)) form the PRC barrel domain.

This sequence belongs to the RimM family. In terms of assembly, binds ribosomal protein uS19.

It is found in the cytoplasm. An accessory protein needed during the final step in the assembly of 30S ribosomal subunit, possibly for assembly of the head region. Essential for efficient processing of 16S rRNA. May be needed both before and after RbfA during the maturation of 16S rRNA. It has affinity for free ribosomal 30S subunits but not for 70S ribosomes. This Pseudothermotoga lettingae (strain ATCC BAA-301 / DSM 14385 / NBRC 107922 / TMO) (Thermotoga lettingae) protein is Ribosome maturation factor RimM.